The sequence spans 296 residues: Probable cell wall protein PGA41 (296 aa).

A signal peptide spans 1–18 (MKFTIVLFTLISVTVAAA). The segment covering 146-212 (IASSTKESSS…ITTISSDSST (67 aa)) has biased composition (low complexity). The interval 146-276 (IASSTKESSS…PNSSQTAPGA (131 aa)) is disordered. The span at 220–245 (QGGGGNSGNNGSNGDGGNDASGGGGV) shows a compositional bias: gly residues. N-linked (GlcNAc...) asparagine glycans are attached at residues Asn-229 and Asn-268. The segment covering 247-274 (NENEQASSPPSSQSSTNSNQPNSSQTAP) has biased composition (low complexity). Residue Gly-275 is the site of GPI-anchor amidated glycine attachment. A propeptide spans 276 to 296 (AANYLSSVSVGTLMILVLGLI) (removed in mature form).

It belongs to the IHD1 family. In terms of processing, the GPI-anchor is attached to the protein in the endoplasmic reticulum and serves to target the protein to the cell surface. There, the glucosamine-inositol phospholipid moiety is cleaved off and the GPI-modified mannoprotein is covalently attached via its lipidless GPI glycan remnant to the 1,6-beta-glucan of the outer cell wall layer.

It localises to the secreted. Its subcellular location is the cell wall. The protein resides in the membrane. Its function is as follows. Probable GPI-anchored cell wall protein that may be involved in cell wall organization, hyphal growth, as well as in virulence. The sequence is that of Probable cell wall protein PGA41 (PGA41) from Candida albicans (strain SC5314 / ATCC MYA-2876) (Yeast).